Here is a 111-residue protein sequence, read N- to C-terminus: Phosphoribosyl-ATP pyrophosphatase (111 aa).

This sequence belongs to the PRA-PH family.

Its subcellular location is the cytoplasm. The catalysed reaction is 1-(5-phospho-beta-D-ribosyl)-ATP + H2O = 1-(5-phospho-beta-D-ribosyl)-5'-AMP + diphosphate + H(+). Its pathway is amino-acid biosynthesis; L-histidine biosynthesis; L-histidine from 5-phospho-alpha-D-ribose 1-diphosphate: step 2/9. This Ectopseudomonas mendocina (strain ymp) (Pseudomonas mendocina) protein is Phosphoribosyl-ATP pyrophosphatase.